The sequence spans 237 residues: Maternal B9.10 protein (237 aa).

It belongs to the BTG family.

This chain is Maternal B9.10 protein, found in Xenopus laevis (African clawed frog).